The sequence spans 197 residues: Ribonuclease HII (197 aa).

An RNase H type-2 domain is found at Ile4 to Ser197. Asp10, Glu11, and Asp106 together coordinate a divalent metal cation.

The protein belongs to the RNase HII family. Mn(2+) serves as cofactor. It depends on Mg(2+) as a cofactor.

It is found in the cytoplasm. It carries out the reaction Endonucleolytic cleavage to 5'-phosphomonoester.. In terms of biological role, endonuclease that specifically degrades the RNA of RNA-DNA hybrids. The polypeptide is Ribonuclease HII (Polynucleobacter necessarius subsp. necessarius (strain STIR1)).